The primary structure comprises 136 residues: Large ribosomal subunit protein uL14 (136 aa).

Belongs to the universal ribosomal protein uL14 family.

In Dictyostelium discoideum (Social amoeba), this protein is Large ribosomal subunit protein uL14 (rpl23).